A 668-amino-acid chain; its full sequence is Type II methyltransferase M.MwoI (668 aa).

Belongs to the N(4)/N(6)-methyltransferase family. N(4) subfamily.

It carries out the reaction a 2'-deoxycytidine in DNA + S-adenosyl-L-methionine = an N(4)-methyl-2'-deoxycytidine in DNA + S-adenosyl-L-homocysteine + H(+). Its function is as follows. A beta subtype methylase, recognizes the double-stranded DNA sequence 5'-GCNNNNNNNGC-3', methylates C-2 on both strands, and protects the DNA from cleavage by the MwoI endonuclease. The polypeptide is Type II methyltransferase M.MwoI (Methanothermobacter wolfeii (Methanobacterium wolfei)).